We begin with the raw amino-acid sequence, 251 residues long: Bidirectional sugar transporter SWEET4 (251 aa).

The Extracellular portion of the chain corresponds to 1–12 (MVNATVARNIAG). N-linked (GlcNAc...) asparagine glycosylation occurs at asparagine 3. The MtN3/slv 1 domain occupies 12 to 96 (GICGNVISLF…LAIFFFFSPT (85 aa)). The chain crosses the membrane as a helical span at residues 13–33 (ICGNVISLFLFLSPIPTFITI). Topologically, residues 34–45 (YKKKKVEEYKAD) are cytoplasmic. The helical transmembrane segment at 46–66 (PYLATVLNCALWVFYGLPMVQ) threads the bilayer. Over 67–72 (PDSLLV) the chain is Extracellular. The helical transmembrane segment at 73–93 (ITINGTGLAIELVYLAIFFFF) threads the bilayer. At 94–103 (SPTSRKVKVG) the chain is on the cytoplasmic side. The helical transmembrane segment at 104-124 (LWLIGEMVFVGIVATCTLLLF) threads the bilayer. The Extracellular segment spans residues 125–132 (HTHNQRSS). Residues 133–153 (FVGIFCVIFVSLMYIAPLTIM) form a helical membrane-spanning segment. A MtN3/slv 2 domain is found at 133 to 216 (FVGIFCVIFV…LILYACYYKT (84 aa)). Over 154-163 (SKVIKTKSVK) the chain is Cytoplasmic. Residues 164–186 (YMPFSLSLANFLNGVVWVIYALI) form a helical membrane-spanning segment. Residues 187–190 (KFDL) are Extracellular-facing. A helical membrane pass occupies residues 191 to 213 (FILIGNGLGTVSGAVQLILYACY). The Cytoplasmic segment spans residues 214-251 (YKTTPKDDEDEEDEENLSKVNSQLQLSGNSGQAKRVSA). Positions 220-251 (DDEDEEDEENLSKVNSQLQLSGNSGQAKRVSA) are disordered. The segment covering 231–245 (SKVNSQLQLSGNSGQ) has biased composition (polar residues).

Belongs to the SWEET sugar transporter family. In terms of assembly, forms homooligomers and heterooligomers with SWEET8 and SWEET17.

Its subcellular location is the cell membrane. Functionally, mediates both low-affinity uptake and efflux of sugar across the plasma membrane. This Arabidopsis thaliana (Mouse-ear cress) protein is Bidirectional sugar transporter SWEET4.